A 390-amino-acid chain; its full sequence is Copper-containing nitrite reductase (390 aa).

A signal peptide spans 1–18; sequence MKRQALAAMIASLFALAA. Residue cysteine 19 is the site of N-palmitoyl cysteine attachment. Cysteine 19 carries S-diacylglycerol cysteine lipidation. The interval 30 to 51 is disordered; it reads ETPAAAAEAASSAAQTAAETPS. Plastocyanin-like domains lie at 101–195 and 245–346; these read WTFD…ILVE and GHVG…LKVE. Cu cation is bound by residues histidine 134, histidine 139, histidine 174, cysteine 175, histidine 183, and methionine 188. Histidine 139 contributes to the substrate binding site. Histidine 280 serves as a coordination point for substrate. Histidine 329 serves as a coordination point for Cu cation. The interval 367 to 390 is disordered; it reads GAAPAASAPAASAPAASASEKSVY. Residues 368 to 390 are compositionally biased toward low complexity; that stretch reads AAPAASAPAASAPAASASEKSVY. A run of 3 repeats spans residues 371-375, 376-380, and 381-385. Residues 371–385 are 3 X 5 AA tandem repeats of A-A-S-A-P; it reads AASAPAASAPAASAS.

It belongs to the multicopper oxidase family. As to quaternary structure, homotrimer. Requires Cu(+) as cofactor. Cu(2+) is required as a cofactor.

It is found in the cell outer membrane. The enzyme catalyses nitric oxide + Fe(III)-[cytochrome c] + H2O = Fe(II)-[cytochrome c] + nitrite + 2 H(+). Catalyzes the reduction of nitrite to nitric oxide (NO). It could be essential for growth and survival in oxygen-depleted environments. The polypeptide is Copper-containing nitrite reductase (aniA) (Neisseria meningitidis serogroup B (strain ATCC BAA-335 / MC58)).